Reading from the N-terminus, the 273-residue chain is Shikimate dehydrogenase (NADP(+)) (273 aa).

Residues 14–16 (SKS) and T61 contribute to the shikimate site. K65 acts as the Proton acceptor in catalysis. D77 lines the NADP(+) pocket. N86 and D102 together coordinate shikimate. NADP(+)-binding positions include 126–130 (GAGGA), 150–155 (NRTYEK), and M213. Position 215 (Y215) interacts with shikimate. G237 lines the NADP(+) pocket.

It belongs to the shikimate dehydrogenase family. Homodimer.

It catalyses the reaction shikimate + NADP(+) = 3-dehydroshikimate + NADPH + H(+). Its pathway is metabolic intermediate biosynthesis; chorismate biosynthesis; chorismate from D-erythrose 4-phosphate and phosphoenolpyruvate: step 4/7. In terms of biological role, involved in the biosynthesis of the chorismate, which leads to the biosynthesis of aromatic amino acids. Catalyzes the reversible NADPH linked reduction of 3-dehydroshikimate (DHSA) to yield shikimate (SA). The chain is Shikimate dehydrogenase (NADP(+)) from Aliivibrio salmonicida (strain LFI1238) (Vibrio salmonicida (strain LFI1238)).